A 348-amino-acid chain; its full sequence is Flagellar P-ring protein (348 aa).

The first 16 residues, Met-1–Ala-16, serve as a signal peptide directing secretion.

This sequence belongs to the FlgI family. As to quaternary structure, the basal body constitutes a major portion of the flagellar organelle and consists of four rings (L,P,S, and M) mounted on a central rod.

It localises to the periplasm. The protein resides in the bacterial flagellum basal body. Functionally, assembles around the rod to form the L-ring and probably protects the motor/basal body from shearing forces during rotation. This Campylobacter jejuni subsp. jejuni serotype O:23/36 (strain 81-176) protein is Flagellar P-ring protein.